A 182-amino-acid polypeptide reads, in one-letter code: Adenylate kinase (182 aa).

Residue 12–17 participates in ATP binding; sequence GAGKGT. The tract at residues 32–61 is NMP; it reads STGELLRKEIDLDTYLGKQVKDIMNKGELV. AMP-binding positions include threonine 33, arginine 38, 59–61, 85–88, and glutamine 92; these read ELV and GYPR. Residues 126-132 form an LID region; sequence LRGRKDD. Residue arginine 127 coordinates ATP. AMP contacts are provided by arginine 129 and arginine 140. Residue glycine 168 participates in ATP binding.

It belongs to the adenylate kinase family. Monomer.

It localises to the cytoplasm. The catalysed reaction is AMP + ATP = 2 ADP. It participates in purine metabolism; AMP biosynthesis via salvage pathway; AMP from ADP: step 1/1. Functionally, catalyzes the reversible transfer of the terminal phosphate group between ATP and AMP. Plays an important role in cellular energy homeostasis and in adenine nucleotide metabolism. This Prochlorococcus marinus (strain MIT 9515) protein is Adenylate kinase.